Reading from the N-terminus, the 1339-residue chain is Tuberous sclerosis 2 protein homolog (1339 aa).

At Ser-1036 the chain carries Phosphoserine. The Rap-GAP domain occupies Ile-1109–Leu-1303.

In terms of assembly, interacts with tsc1.

The protein resides in the cytoplasm. It localises to the nucleus. Together with tsc1, required for uptake of various amino acids from the environment and for proper conjugation. Involved in induction of gene expression of permeases and genes required for meiosis upon nitrogen starvation. May act as a GTPase-activating protein (GAP) for the small GTPase rhb1. This chain is Tuberous sclerosis 2 protein homolog (tsc2), found in Schizosaccharomyces pombe (strain 972 / ATCC 24843) (Fission yeast).